Consider the following 318-residue polypeptide: Ribonuclease Z (318 aa).

The Zn(2+) site is built by His-62, His-64, Asp-66, His-67, His-139, Asp-210, and His-268. Asp-66 serves as the catalytic Proton acceptor.

Belongs to the RNase Z family. As to quaternary structure, homodimer. The cofactor is Zn(2+).

The enzyme catalyses Endonucleolytic cleavage of RNA, removing extra 3' nucleotides from tRNA precursor, generating 3' termini of tRNAs. A 3'-hydroxy group is left at the tRNA terminus and a 5'-phosphoryl group is left at the trailer molecule.. Functionally, zinc phosphodiesterase, which displays some tRNA 3'-processing endonuclease activity. Probably involved in tRNA maturation, by removing a 3'-trailer from precursor tRNA. This is Ribonuclease Z from Gloeothece citriformis (strain PCC 7424) (Cyanothece sp. (strain PCC 7424)).